The following is a 503-amino-acid chain: Glycerol kinase (503 aa).

ADP is bound at residue Thr-14. 3 residues coordinate ATP: Thr-14, Thr-15, and Ser-16. Thr-14 contributes to the sn-glycerol 3-phosphate binding site. Arg-18 contacts ADP. The sn-glycerol 3-phosphate site is built by Arg-84, Glu-85, Tyr-136, and Asp-246. Glycerol contacts are provided by Arg-84, Glu-85, Tyr-136, Asp-246, and Gln-247. The ADP site is built by Thr-268 and Gly-311. ATP contacts are provided by Thr-268, Gly-311, Gln-315, and Gly-412. Positions 412 and 416 each coordinate ADP. Basic and acidic residues predominate over residues 468 to 481 (ERTFSPDSDNEKRE). The tract at residues 468-489 (ERTFSPDSDNEKRERRYKGWKK) is disordered.

It belongs to the FGGY kinase family.

The enzyme catalyses glycerol + ATP = sn-glycerol 3-phosphate + ADP + H(+). Its pathway is polyol metabolism; glycerol degradation via glycerol kinase pathway; sn-glycerol 3-phosphate from glycerol: step 1/1. Its activity is regulated as follows. Inhibited by fructose 1,6-bisphosphate (FBP). Functionally, key enzyme in the regulation of glycerol uptake and metabolism. Catalyzes the phosphorylation of glycerol to yield sn-glycerol 3-phosphate. The protein is Glycerol kinase of Haemophilus influenzae (strain ATCC 51907 / DSM 11121 / KW20 / Rd).